A 140-amino-acid polypeptide reads, in one-letter code: 3-hydroxyacyl-[acyl-carrier-protein] dehydratase FabZ (140 aa).

His47 is a catalytic residue.

It belongs to the thioester dehydratase family. FabZ subfamily.

The protein localises to the cytoplasm. The enzyme catalyses a (3R)-hydroxyacyl-[ACP] = a (2E)-enoyl-[ACP] + H2O. Its function is as follows. Involved in unsaturated fatty acids biosynthesis. Catalyzes the dehydration of short chain beta-hydroxyacyl-ACPs and long chain saturated and unsaturated beta-hydroxyacyl-ACPs. This chain is 3-hydroxyacyl-[acyl-carrier-protein] dehydratase FabZ, found in Streptococcus equi subsp. equi (strain 4047).